Consider the following 106-residue polypeptide: Large ribosomal subunit protein uL24 (106 aa).

The protein belongs to the universal ribosomal protein uL24 family. In terms of assembly, part of the 50S ribosomal subunit.

One of two assembly initiator proteins, it binds directly to the 5'-end of the 23S rRNA, where it nucleates assembly of the 50S subunit. Its function is as follows. One of the proteins that surrounds the polypeptide exit tunnel on the outside of the subunit. This is Large ribosomal subunit protein uL24 from Gluconobacter oxydans (strain 621H) (Gluconobacter suboxydans).